Reading from the N-terminus, the 274-residue chain is F-actin-capping protein subunit alpha (274 aa).

This sequence belongs to the F-actin-capping protein alpha subunit family. In terms of assembly, heterodimer of an alpha and a beta subunit.

The protein localises to the cytoplasm. F-actin-capping proteins bind in a Ca(2+)-independent manner to the fast growing ends of actin filaments (barbed end) thereby blocking the exchange of subunits at these ends. Unlike other capping proteins (such as gelsolin and severin), these proteins do not sever actin filaments. The polypeptide is F-actin-capping protein subunit alpha (Chaetomium thermophilum (strain DSM 1495 / CBS 144.50 / IMI 039719) (Thermochaetoides thermophila)).